Consider the following 276-residue polypeptide: MQNKFSLPTQDEIVKRLKKIPEGLWRECSNCHEKFYYRRAGVYEVCPNCGYGARLGSRKRIKLLCDEFEEWDKAMATDPTNIDDEKYKKKLATGIKTTHVNESVLTGKAKIGNNEFAIGVMDSRFIMGSLGQVTGSKIARMFQEATRQHLPVIMFTASGGARMQDGIHSLMQMARVSDEVARHSAEGLLYIAVITDPTTGGVTASYAMQADIIISEPKTLIGFAGRRVIEQTINQKPPKDFQQAETLLKNGFLDDIVERPNLKEYLNNLLNLHSDK.

In terms of domain architecture, CoA carboxyltransferase N-terminal spans 24 to 276 (LWRECSNCHE…NNLLNLHSDK (253 aa)). Zn(2+) is bound by residues cysteine 28, cysteine 31, cysteine 46, and cysteine 49. Residues 28–49 (CSNCHEKFYYRRAGVYEVCPNC) form a C4-type zinc finger.

The protein belongs to the AccD/PCCB family. As to quaternary structure, acetyl-CoA carboxylase is a heterohexamer composed of biotin carboxyl carrier protein (AccB), biotin carboxylase (AccC) and two subunits each of ACCase subunit alpha (AccA) and ACCase subunit beta (AccD). It depends on Zn(2+) as a cofactor.

It localises to the cytoplasm. The catalysed reaction is N(6)-carboxybiotinyl-L-lysyl-[protein] + acetyl-CoA = N(6)-biotinyl-L-lysyl-[protein] + malonyl-CoA. Its pathway is lipid metabolism; malonyl-CoA biosynthesis; malonyl-CoA from acetyl-CoA: step 1/1. Component of the acetyl coenzyme A carboxylase (ACC) complex. Biotin carboxylase (BC) catalyzes the carboxylation of biotin on its carrier protein (BCCP) and then the CO(2) group is transferred by the transcarboxylase to acetyl-CoA to form malonyl-CoA. This chain is Acetyl-coenzyme A carboxylase carboxyl transferase subunit beta, found in Pediococcus pentosaceus (strain ATCC 25745 / CCUG 21536 / LMG 10740 / 183-1w).